The primary structure comprises 503 residues: Glutamate--tRNA ligase (503 aa).

Positions 14-24 (PSPTGSLHIGG) match the 'HIGH' region motif. A 'KMSKS' region motif is present at residues 261 to 265 (KLSKR). Residue lysine 264 coordinates ATP.

This sequence belongs to the class-I aminoacyl-tRNA synthetase family. Glutamate--tRNA ligase type 1 subfamily. In terms of assembly, monomer.

It localises to the cytoplasm. It catalyses the reaction tRNA(Glu) + L-glutamate + ATP = L-glutamyl-tRNA(Glu) + AMP + diphosphate. Its function is as follows. Catalyzes the attachment of glutamate to tRNA(Glu) in a two-step reaction: glutamate is first activated by ATP to form Glu-AMP and then transferred to the acceptor end of tRNA(Glu). The polypeptide is Glutamate--tRNA ligase (Chloroflexus aurantiacus (strain ATCC 29366 / DSM 635 / J-10-fl)).